The primary structure comprises 341 residues: Peroxisomal membrane protein PEX14 (341 aa).

Position 2 is an N-acetylserine (Ser-2). The SH3-binding motif lies at 86 to 94; it reads PPTLPHRDW. The tract at residues 276 to 341 is disordered; the sequence is MQEESDKEKE…QNGQVEDSIP (66 aa). The segment covering 279–295 has biased composition (basic and acidic residues); the sequence is ESDKEKENGSDANKDDN. The segment covering 308–341 has biased composition (polar residues); that stretch reads IDSNASIPEWQKNTAANEISVPDWQNGQVEDSIP. Phosphoserine is present on Ser-313.

Belongs to the peroxin-14 family. In terms of assembly, interacts with PEX13 (via SH3 domain); forming the PEX13-PEX14 docking complex. Interacts with PEX5 (via WxxxF/Y motifs). Interacts with PEX7. Interacts with PEX9.

It localises to the peroxisome membrane. Functionally, component of the PEX13-PEX14 docking complex, a translocon channel that specifically mediates the import of peroxisomal cargo proteins bound to PEX5 or PEX21 receptors. The PEX13-PEX14 docking complex forms a large import pore which can be opened to a diameter of about 9 nm. Mechanistically, PEX5 (or PEX21) receptor along with cargo proteins associates with the PEX14 subunit of the PEX13-PEX14 docking complex in the cytosol, leading to the insertion of the receptor into the organelle membrane with the concomitant translocation of the cargo into the peroxisome matrix. The protein is Peroxisomal membrane protein PEX14 of Saccharomyces cerevisiae (strain ATCC 204508 / S288c) (Baker's yeast).